Reading from the N-terminus, the 126-residue chain is Large ribosomal subunit protein bL12 (126 aa).

This sequence belongs to the bacterial ribosomal protein bL12 family. As to quaternary structure, homodimer. Part of the ribosomal stalk of the 50S ribosomal subunit. Forms a multimeric L10(L12)X complex, where L10 forms an elongated spine to which 2 to 4 L12 dimers bind in a sequential fashion. Binds GTP-bound translation factors.

In terms of biological role, forms part of the ribosomal stalk which helps the ribosome interact with GTP-bound translation factors. Is thus essential for accurate translation. The chain is Large ribosomal subunit protein bL12 from Geotalea daltonii (strain DSM 22248 / JCM 15807 / FRC-32) (Geobacter daltonii).